Here is a 98-residue protein sequence, read N- to C-terminus: NADH-ubiquinone oxidoreductase chain 4L (98 aa).

Helical transmembrane passes span M1 to F21, A29 to L49, and V58 to L78.

It belongs to the complex I subunit 4L family.

The protein localises to the mitochondrion membrane. It carries out the reaction a ubiquinone + NADH + 5 H(+)(in) = a ubiquinol + NAD(+) + 4 H(+)(out). Core subunit of the mitochondrial membrane respiratory chain NADH dehydrogenase (Complex I) which catalyzes electron transfer from NADH through the respiratory chain, using ubiquinone as an electron acceptor. Part of the enzyme membrane arm which is embedded in the lipid bilayer and involved in proton translocation. In Salmo salar (Atlantic salmon), this protein is NADH-ubiquinone oxidoreductase chain 4L (MT-ND4L).